The following is an 87-amino-acid chain: Phosphoribosyl-ATP pyrophosphatase (87 aa).

The protein belongs to the PRA-PH family.

It is found in the cytoplasm. The enzyme catalyses 1-(5-phospho-beta-D-ribosyl)-ATP + H2O = 1-(5-phospho-beta-D-ribosyl)-5'-AMP + diphosphate + H(+). The protein operates within amino-acid biosynthesis; L-histidine biosynthesis; L-histidine from 5-phospho-alpha-D-ribose 1-diphosphate: step 2/9. This is Phosphoribosyl-ATP pyrophosphatase from Pseudarthrobacter chlorophenolicus (strain ATCC 700700 / DSM 12829 / CIP 107037 / JCM 12360 / KCTC 9906 / NCIMB 13794 / A6) (Arthrobacter chlorophenolicus).